Reading from the N-terminus, the 246-residue chain is 3-oxoacyl-[acyl-carrier-protein] reductase FabG (246 aa).

NADP(+) contacts are provided by residues 62 to 63 (NV) and N89. Residue S141 participates in substrate binding. Y154 (proton acceptor) is an active-site residue. NADP(+) is bound by residues 154–158 (YAASK) and I187.

This sequence belongs to the short-chain dehydrogenases/reductases (SDR) family. In terms of assembly, homotetramer.

It catalyses the reaction a (3R)-hydroxyacyl-[ACP] + NADP(+) = a 3-oxoacyl-[ACP] + NADPH + H(+). Its pathway is lipid metabolism; fatty acid biosynthesis. Its function is as follows. Catalyzes the NADPH-dependent reduction of beta-ketoacyl-ACP substrates to beta-hydroxyacyl-ACP products, the first reductive step in the elongation cycle of fatty acid biosynthesis. The protein is 3-oxoacyl-[acyl-carrier-protein] reductase FabG (fabG) of Thermotoga maritima (strain ATCC 43589 / DSM 3109 / JCM 10099 / NBRC 100826 / MSB8).